The chain runs to 677 residues: Nuclear fusion protein FUS2 (677 aa).

Position 20 is a phosphothreonine (Thr20). Ser67, Ser72, and Ser84 each carry phosphoserine. Residue Thr88 is modified to Phosphothreonine. Ser100 and Ser106 each carry phosphoserine. The DH domain occupies 112 to 326 (KFYKIVQEFY…KYSLFSNKLE (215 aa)).

It localises to the cell tip. Promotes cell fusion during zygote formation. This is Nuclear fusion protein FUS2 (FUS2) from Saccharomyces cerevisiae (strain ATCC 204508 / S288c) (Baker's yeast).